We begin with the raw amino-acid sequence, 295 residues long: Beta-chimaerin (295 aa).

The Phorbol-ester/DAG-type zinc finger occupies 41–91 (THNFKVHTFRGPHWCEYCANFMWGLIAQGVRCSDCGLNVHKQCSKHVPNDC). Residues 104–295 (CDLTTLVKAH…ILIENEDVLF (192 aa)) form the Rho-GAP domain.

In terms of tissue distribution, found in cerebellum and testis.

It is found in the membrane. In the inactive state, the N terminus protrudes into the active site of the Rho-GAP domain, sterically blocking Rac binding. Phospholipid binding to the Phorbol-ester/DAG-type zinc-finger/C1 domain triggers the cooperative dissociation of these interactions, allowing the N-terminus to move out of the active site and thereby activating the enzyme. GTPase-activating protein for p21-rac. The chain is Beta-chimaerin (Chn2) from Rattus norvegicus (Rat).